The chain runs to 88 residues: Exodeoxyribonuclease 7 small subunit (88 aa).

The segment at 69-88 is disordered; it reads DPMRPDDGEPFDPSIVSTSQ.

Belongs to the XseB family. In terms of assembly, heterooligomer composed of large and small subunits.

The protein resides in the cytoplasm. The catalysed reaction is Exonucleolytic cleavage in either 5'- to 3'- or 3'- to 5'-direction to yield nucleoside 5'-phosphates.. Its function is as follows. Bidirectionally degrades single-stranded DNA into large acid-insoluble oligonucleotides, which are then degraded further into small acid-soluble oligonucleotides. The sequence is that of Exodeoxyribonuclease 7 small subunit from Xylella fastidiosa (strain M12).